The following is a 424-amino-acid chain: MVFVACGLNHKTAPIHVREKVALQPAMQDSLLSSLLDLPEVNEAAILSTCNRTEIYCDTNTPEVLGNWLAHEHQLSEELLSQFLYIHQGKEGIKHTLRVASGLDSMMIGEPQILGQMKQAYQHACRLGTVKTQLRPVFEYIFRASKRIRTRSGIGANPVSIAYAAVQLIGQLFKNYHSLSVFLIGSGETASLVAKYLHQHGVHRFLIASRTLENAQKLAETFGGKTLSIGDIPQYLPLADVVISATACPLPFINKSLVEHALEQRNHAPMFLLDLAVPRDIEGNVNELEQVHLYNVDDLQSMIEKGMDERRNAALQAEQLIESELDNYIRWHRSLRAKDVICDYRNQMHTLAQQELQRALKKISAGQNQQDVLNEFSMRLVNKLTHNPTIGLRQIAWDNREDLLDLARYLFDTTANQSLYEEIS.

Residues 49 to 52 (TCNR), Ser105, 110 to 112 (EPQ), and Gln116 contribute to the substrate site. The active-site Nucleophile is the Cys50. An NADP(+)-binding site is contributed by 185–190 (GSGETA).

The protein belongs to the glutamyl-tRNA reductase family. In terms of assembly, homodimer.

It catalyses the reaction (S)-4-amino-5-oxopentanoate + tRNA(Glu) + NADP(+) = L-glutamyl-tRNA(Glu) + NADPH + H(+). It participates in porphyrin-containing compound metabolism; protoporphyrin-IX biosynthesis; 5-aminolevulinate from L-glutamyl-tRNA(Glu): step 1/2. In terms of biological role, catalyzes the NADPH-dependent reduction of glutamyl-tRNA(Glu) to glutamate 1-semialdehyde (GSA). This chain is Glutamyl-tRNA reductase, found in Legionella pneumophila (strain Paris).